Reading from the N-terminus, the 823-residue chain is Semaphorin-4B (823 aa).

An N-terminal signal peptide occupies residues 1-30 (MGRASRSAVLRRALLLLLLLLLLRTTTTRA). Topologically, residues 31-703 (LGPRISVPLG…WGADKSYWNE (673 aa)) are extracellular. Positions 34–510 (RISVPLGSEE…SHSGVVQVPV (477 aa)) constitute a Sema domain. N53, N56, and N83 each carry an N-linked (GlcNAc...) asparagine glycan. Residues C107 and C118 are joined by a disulfide bond. N129 is a glycosylation site (N-linked (GlcNAc...) asparagine). Intrachain disulfides connect C136/C145, C273/C386, and C297/C346. Residues N397 and N512 are each glycosylated (N-linked (GlcNAc...) asparagine). Residues 512-582 (NCSLYPTCGD…RFLVPGKPCK (71 aa)) form the PSI domain. A disulfide bond links C513 and C530. Residues N567, N615, and N680 are each glycosylated (N-linked (GlcNAc...) asparagine). The 61-residue stretch at 589 to 649 (NTVNTLACPL…FQCWSIEEGF (61 aa)) folds into the Ig-like C2-type domain. An intrachain disulfide couples C596 to C642. A helical membrane pass occupies residues 704 to 724 (FLVMCTLFVFAMVLLFLFFLY). At 725-823 (RHRDGMKLFL…LGSEIRDSVV (99 aa)) the chain is on the cytoplasmic side. S779, S780, S804, and S816 each carry phosphoserine.

The protein belongs to the semaphorin family. In terms of assembly, interacts with GIPC PDZ domain.

It localises to the membrane. Its function is as follows. Inhibits axonal extension by providing local signals to specify territories inaccessible for growing axons. In Mus musculus (Mouse), this protein is Semaphorin-4B.